Consider the following 276-residue polypeptide: Exosome complex component Rrp42 (276 aa).

This sequence belongs to the RNase PH family. Rrp42 subfamily. As to quaternary structure, component of the archaeal exosome complex. Forms a hexameric ring-like arrangement composed of 3 Rrp41-Rrp42 heterodimers. The hexameric ring associates with a trimer of Rrp4 and/or Csl4 subunits.

It is found in the cytoplasm. In terms of biological role, non-catalytic component of the exosome, which is a complex involved in RNA degradation. Contributes to the structuring of the Rrp41 active site. The polypeptide is Exosome complex component Rrp42 (Aeropyrum pernix (strain ATCC 700893 / DSM 11879 / JCM 9820 / NBRC 100138 / K1)).